We begin with the raw amino-acid sequence, 165 residues long: Large ribosomal subunit protein uL10 (165 aa).

This sequence belongs to the universal ribosomal protein uL10 family. Part of the ribosomal stalk of the 50S ribosomal subunit. The N-terminus interacts with L11 and the large rRNA to form the base of the stalk. The C-terminus forms an elongated spine to which L12 dimers bind in a sequential fashion forming a multimeric L10(L12)X complex.

Its function is as follows. Forms part of the ribosomal stalk, playing a central role in the interaction of the ribosome with GTP-bound translation factors. This Buchnera aphidicola subsp. Acyrthosiphon pisum (strain 5A) protein is Large ribosomal subunit protein uL10.